Here is a 966-residue protein sequence, read N- to C-terminus: Alanine--tRNA ligase (966 aa).

His646, His650, Cys750, and His754 together coordinate Zn(2+). A disordered region spans residues 927–949; the sequence is DRLGGGGGGRPSLASAGGRDPEA.

The protein belongs to the class-II aminoacyl-tRNA synthetase family. The cofactor is Zn(2+).

It is found in the cytoplasm. The enzyme catalyses tRNA(Ala) + L-alanine + ATP = L-alanyl-tRNA(Ala) + AMP + diphosphate. Functionally, catalyzes the attachment of alanine to tRNA(Ala) in a two-step reaction: alanine is first activated by ATP to form Ala-AMP and then transferred to the acceptor end of tRNA(Ala). Also edits incorrectly charged Ser-tRNA(Ala) and Gly-tRNA(Ala) via its editing domain. The chain is Alanine--tRNA ligase from Salinibacter ruber (strain DSM 13855 / M31).